We begin with the raw amino-acid sequence, 492 residues long: Aspartyl/glutamyl-tRNA(Asn/Gln) amidotransferase subunit B (492 aa).

The protein belongs to the GatB/GatE family. GatB subfamily. Heterotrimer of A, B and C subunits.

It catalyses the reaction L-glutamyl-tRNA(Gln) + L-glutamine + ATP + H2O = L-glutaminyl-tRNA(Gln) + L-glutamate + ADP + phosphate + H(+). It carries out the reaction L-aspartyl-tRNA(Asn) + L-glutamine + ATP + H2O = L-asparaginyl-tRNA(Asn) + L-glutamate + ADP + phosphate + 2 H(+). Allows the formation of correctly charged Asn-tRNA(Asn) or Gln-tRNA(Gln) through the transamidation of misacylated Asp-tRNA(Asn) or Glu-tRNA(Gln) in organisms which lack either or both of asparaginyl-tRNA or glutaminyl-tRNA synthetases. The reaction takes place in the presence of glutamine and ATP through an activated phospho-Asp-tRNA(Asn) or phospho-Glu-tRNA(Gln). The polypeptide is Aspartyl/glutamyl-tRNA(Asn/Gln) amidotransferase subunit B (Azorhizobium caulinodans (strain ATCC 43989 / DSM 5975 / JCM 20966 / LMG 6465 / NBRC 14845 / NCIMB 13405 / ORS 571)).